Consider the following 33-residue polypeptide: Alpha-amanitin proprotein (33 aa).

A propeptide spanning residues 1 to 10 (MSDINATRLP) is cleaved from the precursor. A (3R,4R)-4,5-dihydroxyisoleucine; in form alpha-amanitin modification is found at Ile11. Ile11 is subject to (3R,4S)-4-hydroxyisoleucine; in form gamma-amanitin. A cross-link (cyclopeptide (Ile-Pro)) is located at residues 11-18 (IWGIGCNP). A cross-link (2'-cysteinyl-6'-hydroxytryptophan sulfoxide (Trp-Cys)) is located at residues 12–16 (WGIGC). Pro18 is modified (4-hydroxyproline). Positions 19 to 33 (SVGDEVTALLTSGEA) are excised as a propeptide.

It belongs to the MSDIN fungal toxin family. In terms of processing, processed by the macrocyclase-peptidase enzyme POPB to yield a toxic cyclic decapeptide. POPB first removes 10 residues from the N-terminus. Conformational trapping of the remaining peptide forces the enzyme to release this intermediate rather than proceed to macrocyclization. The enzyme rebinds the remaining peptide in a different conformation and catalyzes macrocyclization of the N-terminal 8 residues.

In terms of biological role, major toxin belonging to the bicyclic octapeptides amatoxins that acts by binding non-competitively to RNA polymerase II and greatly slowing the elongation of transcripts from target promoters. This chain is Alpha-amanitin proprotein, found in Amanita fuliginea (East Asian brown death cap).